We begin with the raw amino-acid sequence, 325 residues long: Geranylgeranyl transferase type-2 subunit beta (325 aa).

PFTB repeat units lie at residues 9–50 (KEKH…CVLD), 57–99 (KEEV…ATYD), 109–150 (KVRL…SILG), 157–198 (VDPA…AIAN), 208–249 (LEEI…AIIG), and 256–298 (YEKL…SLMG). Geranylgeranyl diphosphate-binding positions include 183 to 185 (HAA) and 228 to 240 (RPSK…YSWW). Zn(2+)-binding residues include aspartate 234, cysteine 236, and histidine 286.

It belongs to the protein prenyltransferase subunit beta family. As to quaternary structure, heterodimer of an alpha and a beta subunit. It depends on Zn(2+) as a cofactor.

It carries out the reaction geranylgeranyl diphosphate + L-cysteinyl-[protein] = S-geranylgeranyl-L-cysteinyl-[protein] + diphosphate. Its function is as follows. Catalyzes the transfer of a geranyl-geranyl moiety from geranyl-geranyl pyrophosphate to proteins having the C-terminal -XCC or -XCXC, where both cysteines may become modified. Acts on YPT1 and SEC4. This chain is Geranylgeranyl transferase type-2 subunit beta (BET2), found in Saccharomyces cerevisiae (strain ATCC 204508 / S288c) (Baker's yeast).